A 3242-amino-acid chain; its full sequence is tRNA nuclease CdiA (3242 aa).

An N-terminal signal peptide occupies residues Met-1–Ala-32. Residues Pro-36–Thr-322 form a two-partner system transport domain (TPS) region. An FHA-1 region spans residues Gly-351–Asn-1376. Residues Gln-1377–Trp-1668 form a receptor-binding domain (RBD) region. Residues Trp-1668–Asn-1852 form a YP domain region. Positions Gly-1853–Asn-1913 are periplasmic FHA-1 repeat (pFR). The tract at residues Asp-2021 to Ser-2631 is FHA-2. Residues Arg-2075–His-2091 show a composition bias toward basic and acidic residues. 3 disordered regions span residues Arg-2075–Val-2094, Gly-2310–Gly-2333, and Thr-2439–Asn-2481. Residues Gly-2322–Gly-2333 are compositionally biased toward polar residues. The interval Gly-2969–Ile-3242 is DUF638-CT domain; not toxic when added to the outside of E.coli, does not interfere with F-pilus mediated conjugation, toxic when expressed intracellularly. Residues Pro-2972–Val-3015 form a pre-toxin (PT) domain region. The VENN CT cleavage motif motif lies at Val-3016–Asn-3019. Positions Val-3016 to Tyr-3097 are toxin import domain; sufficient to import the tRNA nuclease domain of colicin E5 into E.coli, may bind F-pili. A CT domain; toxic when added to the outside of E.coli and when expressed intracellularly region spans residues Val-3016–Ile-3242. Residues Ala-3020 to Glu-3141 are inner membrane translocation domain (IMTD), targets protein to FtsH. Residues Ala-3020 to Ile-3242 are C-terminal effector domain (CT). The interval Gly-3098–Ile-3242 is tRNase function, does not interfere with F-pilus mediated conjugation. The disordered stretch occupies residues Lys-3116–Lys-3146. The segment covering Asn-3134–Lys-3146 has biased composition (basic and acidic residues). The stretch at Lys-3137–Lys-3238 forms a coiled coil. Active-site residues include Asp-3170, His-3193, and Glu-3196.

The protein in the N-terminal section; belongs to the CdiA toxin family. The C-terminal (CT) domain interacts with cognate CdiI but not non-cognate CdiI from D.dadantii strain 3937. CdiA-CT also interacts with CysK; this is blocked upon preincubation with O-acetyl-L-serine. CysK forms a complex with CdiA-CT/CdiI. One CdiA toxin subunit binds to each subunit of the CysK homodimer, and one CdiI immunity protein binds to each toxin subunit; the immune complex is thus a dimer of trimers. The 4 C-terminal residues of CdiA fit into the active site of CysK. A divalent metal cation is required as a cofactor.

It is found in the secreted. The protein localises to the target cell membrane. Its subcellular location is the target cell. It localises to the target cell cytoplasm. Its function is as follows. Toxic component of a toxin-immunity protein module, which functions as a cellular contact-dependent growth inhibition (CDI) system. CDI modules allow bacteria to communicate with and inhibit the growth of closely related neighboring bacteria in a contact-dependent fashion (target cell counts decrease 100- to 1000-fold). CdiA toxicity is neutralized by its cognate immunity protein CdiI, but not by CdiI from other bacteria. Uses heterotrimeric OmpC and OmpF as target cell outer membrane receptors; receptor function depends on polymorphisms in extracellular loops L4 and L5 of OmpC; interacts with itself and closely related bacteria but also with OmpC from E.cloacae ATCC 13047. Its ability to preferentially bind to 'self' receptors suggests it may also play a role in self-recognition and kin selection. A bamA mutation that decreases its expression about 5-fold is partially resistant to this strain of CdiA, probably due to decreased outer membrane receptor protein assembly. Isolated CdiA-CT is imported in an F-pilus-mediated fashion; CdiA-CT inhibits F-mediated conjugation, probably via its N-terminus (residues 3016-3097), although it is not clear if this is physiologically significant. Gains access to the cytoplasm of target cells by using integral inner membrane protein FtsH. The C-terminal domain (CT) cleaves within tRNA anticodon loops; this activity is inhibited by cognate CdiI. tRNase activity of CdiA-CT is stimulated by CysK, although the extreme C-terminus (residues 3098-3242) has tRNase activity in the absence of CysK. In vivo CDI toxicity requires CysK. CysK stabilizes CdiA-CT, allowing it to bind tRNA substrate; neither CdiA-CT nor CysK bind tRNA alone in vitro. Purified CdiA-CT (residues 3016-3242) inhibits E.coli cell growth when added to cultures alone or in complex with cognate CdiI, growth is inhibited when cognate CdiI is present within the cell but not when a CdiA-CT/CdiI complex is added extracellularly, suggesting CdiA-CT alone but not the CdiA-CT/CdiI complex is imported into the target cell. Functionally, the CdiA protein is thought to be exported from the cell through the central lumen of CdiB, the other half of its two-partner system (TPS). The TPS domain probably remains associated with CdiB while the FHA-1 domain forms an extended filament with the receptor-binding domain (RBD) at its extremity; in the secretion arrested state the C-terminus of the RBD and YP domains form a hairpin-like structure as the FHA-2, PT and CT domains are periplasmic. The YP domain is probably responsible for this arrest at the point where it re-enters the host cell periplasm. Upon binding to a target cell outer membrane receptor (heterotrimeric OmpC-OmpF for this CDI) a signal is transmitted to activate secretion. The filament elongates slightly, the rest of CdiA is secreted and the FHA-2 domain becomes stably associated with the target cell's outer membrane where it facilitates entry of the toxic CT domain into the target cell periplasm. From there the toxic CT domain is cleaved and gains access to the target cell cytoplasm via an inner membrane protein (FtsH for this CDI). The sequence is that of tRNA nuclease CdiA from Escherichia coli O6:K15:H31 (strain 536 / UPEC).